The chain runs to 606 residues: Endo-beta-1,4-xylanase Xyn10C (606 aa).

Residues 1–19 form the signal peptide; that stretch reads MKKIQQLLMLSLISSTLIA. Cysteine 20 carries the N-palmitoyl cysteine lipid modification. A lipid anchor (S-diacylglycerol cysteine) is attached at cysteine 20. Residues 23 to 64 are disordered; it reads GGGGGSTPTTSSSPQSSSPASTPSSASSSSIISSSSLSSSLS. The segment covering 29–64 has biased composition (low complexity); the sequence is TPTTSSSPQSSSPASTPSSASSSSIISSSSLSSSLS. A CBM15 domain is found at 91–242; that stretch reads GNVVIEVDMA…KSVTITLAQE (152 aa). Positions 106 and 171 each coordinate a carbohydrate. Cysteine 183 and cysteine 200 form a disulfide bridge. Glutamine 217 contributes to the a carbohydrate binding site. The region spanning 245-596 is the GH10 domain; it reads SANVDHLRDL…KPALRGFADA (352 aa). Substrate contacts are provided by residues 296-299, histidine 332, and asparagine 384; that span reads NIMK. Catalysis depends on glutamate 385, which acts as the Proton donor. The active-site Nucleophile is the glutamate 497. A substrate-binding site is contributed by tryptophan 552.

Belongs to the glycosyl hydrolase 10 (cellulase F) family.

It is found in the cell outer membrane. It catalyses the reaction Endohydrolysis of (1-&gt;4)-beta-D-xylosidic linkages in xylans.. Its pathway is glycan degradation; xylan degradation. Its function is as follows. Endo-acting xylanase which specifically cleaves internal linkages on the xylan backbone, releasing xylooligosaccharides. Is able to hydrolyze oat spelt xylan, the arabinoxylans from wheat and rye, and glucuronoxylan. Also displays very low activity against xylooligosaccharides. During the xylan degradation process, Xyn10C may act on the soluble xylans and long xylooligosaccharides products released by the secreted xylanases Xyn11A, Xyn11B and Xyn10A. The protein is Endo-beta-1,4-xylanase Xyn10C (xyn10C) of Cellvibrio japonicus (Pseudomonas fluorescens subsp. cellulosa).